The chain runs to 409 residues: Salivary endonuclease (409 aa).

The first 20 residues, 1-20 (MHLQLNLCAILLSVLNGIQG), serve as a signal peptide directing secretion. Asn37 and Asn102 each carry an N-linked (GlcNAc...) asparagine glycan. Catalysis depends on His216, which acts as the Proton acceptor. Position 246 (Asn246) interacts with Mg(2+). 2 N-linked (GlcNAc...) asparagine glycosylation sites follow: Asn351 and Asn381.

The protein belongs to the DNA/RNA non-specific endonuclease family. Requires Mg(2+) as cofactor. In terms of tissue distribution, salivary gland.

It is found in the secreted. Its function is as follows. Hydrolyzes single-stranded and double-stranded DNA with little sequence specificity. Inhibits contact pathway of blood coagulation in the host by preventing activation of coagulation factor XII (F12) triggered by soluble DNA. Modestly up-regulates expression of CSF2, CXCL1 and CXCL8 in cultured human dermal microvascular endothelial cells. At higher doses promotes host neutrophil recruitment at the injection site in mouse model. Functionally, (Microbial infection) Increases Leishmania major survival in the host by disrupting parasite-induced neutrophil extracellular traps. Exacerbates L.major parasite infectivity and increases cutaneous lesions in mouse model. This is Salivary endonuclease from Lutzomyia longipalpis (Sand fly).